A 478-amino-acid chain; its full sequence is UDP-glycosyltransferase 90A1 (478 aa).

Residues threonine 289, 343–345, 360–368, and 382–385 contribute to the UDP-alpha-D-glucose site; these read VDQ, HCGWNSAQE, and MAEQ.

The protein belongs to the UDP-glycosyltransferase family.

The protein is UDP-glycosyltransferase 90A1 (UGT90A1) of Arabidopsis thaliana (Mouse-ear cress).